A 933-amino-acid polypeptide reads, in one-letter code: Progesterone receptor (933 aa).

The disordered stretch occupies residues 1 to 157 (MTELKAKGPR…PEDPPAAPAT (157 aa)). The interval 1–164 (MTELKAKGPR…PATQRVLSPL (164 aa)) is AF3; mediates transcriptional activation (in isoform B). The tract at residues 1–566 (MTELKAKGPR…YSFESLPQKI (566 aa)) is modulating, Pro-Rich. Residue Lys-7 forms a Glycyl lysine isopeptide (Lys-Gly) (interchain with G-Cter in SUMO) linkage. Ser-20 is subject to Phosphoserine. The LXXL motif 1 motif lies at 55–59 (LDGLL). A phosphoserine mark is found at Ser-81 and Ser-102. An LXXL motif 2 motif is present at residues 115 to 119 (LDTLL). Phosphoserine is present on residues Ser-130 and Ser-162. The mediates transcriptional transrepression (in isoform A) stretch occupies residues 165–305 (MSRSGCKVGD…LATTVMDFIH (141 aa)). The short motif at 183–187 (KVLPR) is the Nuclear localization signal element. Ser-190 and Ser-213 each carry phosphoserine. The segment at 195 to 241 (LLLPASESPHWSGAPVKPSPQAAAVEVEEEDGSESEESAGPLLKGKP) is disordered. The segment covering 220–231 (EVEEEDGSESEE) has biased composition (acidic residues). Positions 232 to 241 (SAGPLLKGKP) are enriched in low complexity. The residue at position 294 (Ser-294) is a Phosphoserine; by MAPK1. The interval 331 to 351 (GGAGAASAFAPPRSSPCASST) is disordered. Positions 335–350 (AASAFAPPRSSPCASS) are enriched in low complexity. Ser-345 is subject to Phosphoserine; by MAPK. Residue Lys-388 forms a Glycyl lysine isopeptide (Lys-Gly) (interchain with G-Cter in SUMO); alternate linkage. Lys-388 participates in a covalent cross-link: Glycyl lysine isopeptide (Lys-Gly) (interchain with G-Cter in ubiquitin); alternate. A Phosphoserine; by CDK2 modification is found at Ser-400. The disordered stretch occupies residues 415 to 452 (PDFPLGPPPPLPPRATPSRPGEAAVTAAPASASVSSAS). The span at 418–429 (PLGPPPPLPPRA) shows a compositional bias: pro residues. A compositionally biased stretch (low complexity) spans 430–452 (TPSRPGEAAVTAAPASASVSSAS). The interval 456–546 (STLECILYKA…VYPPYLNYLR (91 aa)) is AF1; mediates transcriptional activation. Lys-531 participates in a covalent cross-link: Glycyl lysine isopeptide (Lys-Gly) (interchain with G-Cter in SUMO). 2 NR C4-type zinc fingers span residues 567 to 587 (CLIC…CGSC) and 603 to 627 (CAGR…LRKC). Positions 567 to 639 (CLICGDEASG…AGMVLGGRKF (73 aa)) form a DNA-binding region, nuclear receptor. Ser-676 bears the Phosphoserine mark. An NR LBD domain is found at 679–913 (QDIQLIPPLI…EFPEMMSEVI (235 aa)). The segment at 687–933 (LINLLMSIEP…MVKPLLFHKK (247 aa)) is AF2; mediates transcriptional activation. A progesterone-binding site is contributed by Arg-766.

Belongs to the nuclear hormone receptor family. NR3 subfamily. As to quaternary structure, interacts with SMARD1 and UNC45A. Interacts with CUEDC2; the interaction promotes ubiquitination, decreases sumoylation, and represses transcriptional activity. Interacts with PIAS3; the interaction promotes sumoylation of PR in a hormone-dependent manner, inhibits DNA-binding, and alters nuclear export. Interacts with SP1; the interaction requires ligand-induced phosphorylation on Ser-345 by ERK1/2 MAPK. Interacts with PRMT2. Isoform A interacts with NCOR2. Isoform B (but not isoform A) interacts with NCOA2 and NCOA1. Isoform B (but not isoform A) interacts with KLF9. Interacts with GTF2B. Post-translationally, phosphorylated on multiple serine sites. Several of these sites are hormone-dependent. Phosphorylation on Ser-294 occurs preferentially on isoform B, is highly hormone-dependent and modulates ubiquitination and sumoylation on Lys-388. Phosphorylation on Ser-102 and Ser-345 also requires induction by hormone. Basal phosphorylation on Ser-81, Ser-162, Ser-190 and Ser-400 is increased in response to progesterone and can be phosphorylated in vitro by the CDK2-A1 complex. Increased levels of phosphorylation on Ser-400 also in the presence of EGF, heregulin, IGF, PMA and FBS. Phosphorylation at this site by CDK2 is ligand-independent, and increases nuclear translocation and transcriptional activity. Phosphorylation at Ser-162 and Ser-294, but not at Ser-190, is impaired during the G(2)/M phase of the cell cycle. Phosphorylation on Ser-345 by ERK1/2 MAPK is required for interaction with SP1. Sumoylation is hormone-dependent and represses transcriptional activity. Sumoylation on all three sites is enhanced by PIAS3. Desumoylated by SENP1. Sumoylation on Lys-388, the main site of sumoylation, is repressed by ubiquitination on the same site, and modulated by phosphorylation at Ser-294. In terms of processing, ubiquitination is hormone-dependent and represses sumoylation on the same site. Promoted by MAPK-mediated phosphorylation on Ser-294. Ubiquitinated by UBR5, leading to its degradation: UBR5 specifically recognizes and binds ligand-bound PGR when it is not associated with coactivators (NCOAs). In presence of NCOAs, the UBR5-degron is not accessible, preventing its ubiquitination and degradation. Post-translationally, palmitoylated by ZDHHC7 and ZDHHC21. Palmitoylation is required for plasma membrane targeting and for rapid intracellular signaling via ERK and AKT kinases and cAMP generation. In terms of tissue distribution, in reproductive tissues the expression of isoform A and isoform B varies as a consequence of developmental and hormonal status. Isoform A and isoform B are expressed in comparable levels in uterine glandular epithelium during the proliferative phase of the menstrual cycle. Expression of isoform B but not of isoform A persists in the glands during mid-secretory phase. In the stroma, isoform A is the predominant form throughout the cycle. Heterogeneous isoform expression between the glands of the endometrium basalis and functionalis is implying region-specific responses to hormonal stimuli.

Its subcellular location is the nucleus. The protein resides in the cytoplasm. It localises to the mitochondrion outer membrane. Its function is as follows. The steroid hormones and their receptors are involved in the regulation of eukaryotic gene expression and affect cellular proliferation and differentiation in target tissues. Depending on the isoform, progesterone receptor functions as a transcriptional activator or repressor. In terms of biological role, ligand-dependent transdominant repressor of steroid hormone receptor transcriptional activity including repression of its isoform B, MR and ER. Transrepressional activity may involve recruitment of corepressor NCOR2. Transcriptional activator of several progesteron-dependent promoters in a variety of cell types. Involved in activation of SRC-dependent MAPK signaling on hormone stimulation. Functionally, increases mitochondrial membrane potential and cellular respiration upon stimulation by progesterone. The protein is Progesterone receptor (PGR) of Homo sapiens (Human).